A 514-amino-acid polypeptide reads, in one-letter code: 1,25-dihydroxyvitamin D(3) 24-hydroxylase, mitochondrial (514 aa).

The N-terminal 35 residues, 1–35 (MSCPIDKRRTLIAFLRRLRDLGQPPRSVTSKASAS), are a transit peptide targeting the mitochondrion. C462 contacts heme.

It belongs to the cytochrome P450 family. It depends on heme as a cofactor.

The protein resides in the mitochondrion. The catalysed reaction is calcitriol + 2 reduced [adrenodoxin] + O2 + 2 H(+) = calcitetrol + 2 oxidized [adrenodoxin] + H2O. It catalyses the reaction calcitetrol + 2 reduced [adrenodoxin] + O2 + 2 H(+) = (1S)-1,25-dihydroxy-24-oxocalciol + 2 oxidized [adrenodoxin] + 2 H2O. The enzyme catalyses (1S)-1,25-dihydroxy-24-oxocalciol + 2 reduced [adrenodoxin] + O2 + 2 H(+) = (1S)-1,23,25-trihydroxy-24-oxocalciol + 2 oxidized [adrenodoxin] + H2O. It carries out the reaction (1S)-1,23-dihydroxy-24,25,26,27-tetranorcalciol + 2 reduced [adrenodoxin] + O2 + 2 H(+) = (1S)-1-hydroxy-23-oxo-24,25,26,27-tetranorcalciol + 2 oxidized [adrenodoxin] + 2 H2O. The catalysed reaction is (1S)-1-hydroxy-23-oxo-24,25,26,27-tetranorcalciol + 2 reduced [adrenodoxin] + O2 + H(+) = calcitroate + 2 oxidized [adrenodoxin] + H2O. It catalyses the reaction calcidiol + 2 reduced [adrenodoxin] + O2 + 2 H(+) = secalciferol + 2 oxidized [adrenodoxin] + H2O. The enzyme catalyses secalciferol + 2 reduced [adrenodoxin] + O2 + 2 H(+) = 25-hydroxy-24-oxocalciol + 2 oxidized [adrenodoxin] + 2 H2O. It carries out the reaction 25-hydroxy-24-oxocalciol + 2 reduced [adrenodoxin] + O2 + 2 H(+) = 23S,25-dihydroxy-24-oxocholecalciferol + 2 oxidized [adrenodoxin] + H2O. The catalysed reaction is 20S,23-dihydroxycholecalciferol + 2 reduced [adrenodoxin] + O2 + 2 H(+) = 20S,23,25-trihydroxycholecalciferol + 2 oxidized [adrenodoxin] + H2O. It catalyses the reaction 20S,23-dihydroxycholecalciferol + 2 reduced [adrenodoxin] + O2 + 2 H(+) = 20S,23,24-trihydroxycholecalciferol + 2 oxidized [adrenodoxin] + H2O. The enzyme catalyses 20S-hydroxycholecalciferol + 2 reduced [adrenodoxin] + O2 + 2 H(+) = 20S,25-dihydroxycholecalciferol + 2 oxidized [adrenodoxin] + H2O. It carries out the reaction 20S-hydroxycholecalciferol + 2 reduced [adrenodoxin] + O2 + 2 H(+) = 20S,24S-dihydroxycholecalciferol + 2 oxidized [adrenodoxin] + H2O. The catalysed reaction is 20S-hydroxycholecalciferol + 2 reduced [adrenodoxin] + O2 + 2 H(+) = 20S,24R-dihydroxycholecalciferol + 2 oxidized [adrenodoxin] + H2O. In terms of biological role, a cytochrome P450 monooxygenase with a key role in vitamin D catabolism and calcium homeostasis. Via C24-oxidation pathway, catalyzes the inactivation of both the vitamin D precursor calcidiol (25-hydroxyvitamin D(3)) and the active hormone calcitriol (1-alpha,25-dihydroxyvitamin D(3)). With initial hydroxylation at C-24 (via C24-oxidation pathway), performs a sequential 6-step oxidation of calcitriol leading to the formation of the biliary metabolite calcitroic acid. Hydroxylates at C-24 or C-25 other vitamin D active metabolites, such as CYP11A1-derived secosteroids 20S-hydroxycholecalciferol and 20S,23-dihydroxycholecalciferol. Mechanistically, uses molecular oxygen inserting one oxygen atom into a substrate, and reducing the second into a water molecule, with two electrons provided by NADPH via FDXR/adrenodoxin reductase and FDX1/adrenodoxin. This is 1,25-dihydroxyvitamin D(3) 24-hydroxylase, mitochondrial (Cyp24a1) from Rattus norvegicus (Rat).